The chain runs to 427 residues: Glutamate-1-semialdehyde 2,1-aminomutase (427 aa).

Lys265 carries the post-translational modification N6-(pyridoxal phosphate)lysine.

This sequence belongs to the class-III pyridoxal-phosphate-dependent aminotransferase family. HemL subfamily. Homodimer. It depends on pyridoxal 5'-phosphate as a cofactor.

It localises to the cytoplasm. It catalyses the reaction (S)-4-amino-5-oxopentanoate = 5-aminolevulinate. It participates in porphyrin-containing compound metabolism; protoporphyrin-IX biosynthesis; 5-aminolevulinate from L-glutamyl-tRNA(Glu): step 2/2. The chain is Glutamate-1-semialdehyde 2,1-aminomutase from Burkholderia ambifaria (strain MC40-6).